The chain runs to 550 residues: Carnitine transporter (550 aa).

12 helical membrane passes run 15–35 (FLAV…AIYS), 53–73 (FTTP…GLAF), 92–112 (SWIF…WGFL), 137–157 (VAYS…LASI), 196–216 (MFLL…AVTF), 230–250 (FMTK…SSYV), 263–283 (VCLG…TQFI), 317–337 (WTVF…LFVT), 347–367 (EVIF…FGVF), 401–421 (LLPA…VFLA), 451–471 (LFWC…KAPL), and 477–497 (ATIV…YGLV).

The protein belongs to the BCCT transporter (TC 2.A.15) family.

Its subcellular location is the cell inner membrane. Its activity is regulated as follows. Inhibited by the protonophore 3,3',4',5-tetrachlorosalicylanilide (TCS). Not activated by osmolarity. Catalyzes the energy-dependent uptake of carnitine and is essential for growth on carnitine. Can also mediate the uptake of choline. Is probably a proton:substrate symporter. This chain is Carnitine transporter, found in Acinetobacter baumannii (strain ATCC 19606 / DSM 30007 / JCM 6841 / CCUG 19606 / CIP 70.34 / NBRC 109757 / NCIMB 12457 / NCTC 12156 / 81).